The chain runs to 289 residues: Probable aquaporin PIP-type 7a (289 aa).

Residues 1–39 (MEAKEQDVSLGANKFPERQPLGIAAQSQDEPKDYQEPPP) are disordered. Residues 1–57 (MEAKEQDVSLGANKFPERQPLGIAAQSQDEPKDYQEPPPAPLFEPSELTSWSFYRAG) are Cytoplasmic-facing. The chain crosses the membrane as a helical span at residues 58–78 (IAEFIATFLFLYITVLTVMGV). Topologically, residues 79-91 (VRESSKCKTVGIQ) are extracellular. A helical transmembrane segment spans residues 92–112 (GIAWAFGGMIFALVYCTAGIS). The Cytoplasmic portion of the chain corresponds to 113–135 (GGHINPAVTFGLFLARKLSLTRA). Positions 117–119 (NPA) match the NPA 1 motif. The helical transmembrane segment at 136 to 156 (IFYMVMQVLGAICGAGVVKGF) threads the bilayer. Residues 157–178 (EGKQRFGDLNGGANFVAPGYTK) are Extracellular-facing. A helical transmembrane segment spans residues 179–199 (GDGLGAEIVGTFILVYTVFSA). The Cytoplasmic portion of the chain corresponds to 200-212 (TDAKRSARDSHVP). The helical transmembrane segment at 213–233 (ILAPLPIGFAVFLVHLATIPI) threads the bilayer. Residues 234–260 (TGTGINPARSLGAAIVFNKKIGWNDHW) lie on the Extracellular side of the membrane. The short motif at 239 to 241 (NPA) is the NPA 2 element. The chain crosses the membrane as a helical span at residues 261–281 (IFWVGPFIGAALAALYHQVVI). The Cytoplasmic portion of the chain corresponds to 282 to 289 (RAIPFKSK).

It belongs to the MIP/aquaporin (TC 1.A.8) family. PIP (TC 1.A.8.11) subfamily.

Its subcellular location is the cell membrane. Functionally, aquaporins facilitate the transport of water and small neutral solutes across cell membranes. In Pisum sativum (Garden pea), this protein is Probable aquaporin PIP-type 7a (TRG-31).